We begin with the raw amino-acid sequence, 588 residues long: D-3-phosphoglycerate dehydrogenase 3, chloroplastic (588 aa).

The transit peptide at 1–38 directs the protein to the chloroplast; sequence MATSLNLSSIFSSSSRLVTTPSSVFPIRQRRRIILVTS. NAD(+) is bound by residues 195 to 196, D215, 274 to 276, and D300; these read KV and VAR. Residue R276 is part of the active site. Residue E305 is part of the active site. The active-site Proton donor is H324. 324-327 is an NAD(+) binding site; sequence HLGA. One can recognise an ACT domain in the interval 516 to 588; that stretch reads VILCRQVDQP…AIEEFVFLKL (73 aa).

Belongs to the D-isomer specific 2-hydroxyacid dehydrogenase family. In terms of tissue distribution, expressed in aerial parts. Not detected in roots and meristematic tissue. Expressed in cotyledons, adult leaves, stigma and anther filaments. Detected in the embryo.

It is found in the plastid. The protein localises to the chloroplast. It carries out the reaction (2R)-3-phosphoglycerate + NAD(+) = 3-phosphooxypyruvate + NADH + H(+). The protein operates within amino-acid biosynthesis; L-serine biosynthesis; L-serine from 3-phospho-D-glycerate: step 1/3. Its activity is regulated as follows. Partially inhibited by 1 mM serine. Its function is as follows. Involved in the plastidial phosphorylated pathway of serine biosynthesis (PPSB). The protein is D-3-phosphoglycerate dehydrogenase 3, chloroplastic (PGDH3) of Arabidopsis thaliana (Mouse-ear cress).